Reading from the N-terminus, the 249-residue chain is Probable transglycosylase SceD 2 (249 aa).

An N-terminal signal peptide occupies residues methionine 1 to alanine 27. 2 stretches are compositionally biased toward low complexity: residues tryptophan 80–glutamate 95 and glutamine 103–serine 171. The tract at residues tryptophan 80–glutamine 203 is disordered. Composition is skewed to polar residues over residues glycine 172–glutamine 182 and threonine 192–glutamine 203.

This sequence belongs to the transglycosylase family. SceD subfamily.

It localises to the secreted. Functionally, is able to cleave peptidoglycan and affects clumping and separation of bacterial cells. The sequence is that of Probable transglycosylase SceD 2 (sceD2) from Staphylococcus saprophyticus subsp. saprophyticus (strain ATCC 15305 / DSM 20229 / NCIMB 8711 / NCTC 7292 / S-41).